A 198-amino-acid chain; its full sequence is Recombination protein RecR (198 aa).

A C4-type zinc finger spans residues 58–73 (CSVCGNFTDTDPCAIC). Residues 81–175 (DIICVVEQPK…KVTRIAAGIP (95 aa)) enclose the Toprim domain.

This sequence belongs to the RecR family.

May play a role in DNA repair. It seems to be involved in an RecBC-independent recombinational process of DNA repair. It may act with RecF and RecO. The protein is Recombination protein RecR of Clostridium perfringens (strain ATCC 13124 / DSM 756 / JCM 1290 / NCIMB 6125 / NCTC 8237 / Type A).